The primary structure comprises 165 residues: UPF0114 protein in repA1-repA2 intergenic region (165 aa).

The next 3 helical transmembrane spans lie at Tyr-10–Leu-32, Leu-53–Phe-75, and Asp-134–Ile-156.

This sequence belongs to the UPF0114 family.

The protein resides in the cell membrane. The polypeptide is UPF0114 protein in repA1-repA2 intergenic region (Buchnera aphidicola subsp. Baizongia pistaciae (strain Bp)).